The sequence spans 393 residues: Prokineticin receptor 1 (393 aa).

Topologically, residues 1-62 are extracellular; that stretch reads METTVGTLGE…TNSRTFFAAK (62 aa). N-linked (GlcNAc...) asparagine glycosylation occurs at asparagine 11. Residues 63 to 83 traverse the membrane as a helical segment; the sequence is IVIGMALVGIMLVCGIGNFIF. Over 84-98 the chain is Cytoplasmic; that stretch reads ITALARYKKLRNLTN. Residues 99-119 traverse the membrane as a helical segment; sequence LLIANLAISDFLVAIVCCPFE. Residues 120–145 are Extracellular-facing; it reads MDYYVVRQLSWEHGHVLCASVNYLRT. A disulfide bond links cysteine 137 and cysteine 217. Residues 146-166 form a helical membrane-spanning segment; it reads VSLYVSTNALLAIAIDRYLAI. Topologically, residues 167–179 are cytoplasmic; the sequence is VHPLRPRMKCQTA. The chain crosses the membrane as a helical span at residues 180-200; sequence AGLIFLVWSVSILIAIPAAYF. At 201 to 232 the chain is on the extracellular side; the sequence is TTETVLVIVESQEKIFCGQIWPVDQQFYYRSY. The helical transmembrane segment at 233–253 threads the bilayer; that stretch reads FLLVFGLEFVGPVIAMTLCYA. Over 254–282 the chain is Cytoplasmic; the sequence is RVSRELWFKAVPGFQTEQIRRRLRCRRRT. A helical transmembrane segment spans residues 283 to 303; sequence VLGLVCVLSAYVLCWAPFYGF. Topologically, residues 304 to 322 are extracellular; that stretch reads TIVRDFFPSVFVKEKHYLT. The helical transmembrane segment at 323–343 threads the bilayer; sequence AFYVVECIAMSNSMINTLCFV. Topologically, residues 344–393 are cytoplasmic; sequence TVRNNTSKYLKRILRLQWRASPSGSKASADLDLRTTGIPATEEVDCIRLK.

The protein belongs to the G-protein coupled receptor 1 family. As to expression, widely expressed in peripheral tissues with the highest level in the spleen and moderate levels in the adipose tissues, thymus, lung, kidney, testis, uterus and small intestine.

It localises to the cell membrane. Its function is as follows. Receptor for prokineticin 1. Exclusively coupled to the G(q) subclass of heteromeric G proteins. Activation leads to mobilization of calcium, stimulation of phosphoinositide turnover and activation of p44/p42 mitogen-activated protein kinase. May play a role during early pregnancy. In Rattus norvegicus (Rat), this protein is Prokineticin receptor 1 (Prokr1).